The primary structure comprises 262 residues: 4-hydroxy-2-oxovalerate aldolase (262 aa).

Catalysis depends on His48, which acts as the Proton acceptor. Gln149 serves as a coordination point for substrate. Mg(2+) is bound at residue Glu151. The substrate site is built by Ala176 and Asp177. Residue Asp177 participates in Mg(2+) binding.

It belongs to the HpcH/HpaI aldolase family.

It carries out the reaction (S)-4-hydroxy-2-oxopentanoate = acetaldehyde + pyruvate. It functions in the pathway xenobiotic degradation; biphenyl degradation. In terms of biological role, catalyzes the reversible retro-aldol cleavage of 4-hydroxy-2-oxovalerate to pyruvate and acetaldehyde. The polypeptide is 4-hydroxy-2-oxovalerate aldolase (bphF) (Novosphingobium aromaticivorans (Sphingomonas aromaticivorans)).